The sequence spans 447 residues: Trigger factor (447 aa).

The region spanning 159–244 is the PPIase FKBP-type domain; it reads GDMLLMQVES…VREIKEEKLP (86 aa).

It belongs to the FKBP-type PPIase family. Tig subfamily.

The protein localises to the cytoplasm. It catalyses the reaction [protein]-peptidylproline (omega=180) = [protein]-peptidylproline (omega=0). Its function is as follows. Involved in protein export. Acts as a chaperone by maintaining the newly synthesized protein in an open conformation. Functions as a peptidyl-prolyl cis-trans isomerase. This Dehalococcoides mccartyi (strain CBDB1) protein is Trigger factor.